We begin with the raw amino-acid sequence, 450 residues long: L-lysine-epsilon aminotransferase (450 aa).

Pyridoxal 5'-phosphate-binding residues include Gly127 and Ala128. Positions 168 and 274 each coordinate 2-oxoglutarate. Arg168 lines the L-lysine pocket. Gln274 is a binding site for pyridoxal 5'-phosphate. Lys300 is modified (N6-(pyridoxal phosphate)lysine). Arg423 is a 2-oxoglutarate binding site.

The protein belongs to the class-III pyridoxal-phosphate-dependent aminotransferase family. Requires pyridoxal 5'-phosphate as cofactor.

It catalyses the reaction L-lysine + 2-oxoglutarate = (S)-2-amino-6-oxohexanoate + L-glutamate. It participates in antibiotic biosynthesis; cephamycin C biosynthesis. Catalyzes the transfer of the terminal amino group of L-lysine to alpha-ketoglutarate to yield L-glutamate and 2-aminoadipate 6-semialdehyde ((S)-2-amino-6-oxohexanoate), which is spontaneously converted to the dehydrated form 1-piperideine 6-carboxylate. The protein is L-lysine-epsilon aminotransferase of Amycolatopsis lactamdurans (Nocardia lactamdurans).